A 607-amino-acid polypeptide reads, in one-letter code: Protein NRT1/ PTR FAMILY 1.2 (607 aa).

A run of 10 helical transmembrane segments spans residues 65-85 (TNVL…GAFL), 96-116 (ISIA…TAML), 138-158 (ASQL…SGGI), 185-205 (FFGW…TGIV), 215-235 (IGFG…ILAS), 374-394 (VPAG…VILY), 418-438 (MGLG…VESF), 460-480 (AMWL…TAIG), 496-516 (IAAS…SVVL), and 544-564 (YYWV…ICSW). Ser601 carries the phosphoserine modification.

The protein belongs to the major facilitator superfamily. Proton-dependent oligopeptide transporter (POT/PTR) (TC 2.A.17) family. Expressed in shoots, stems, leaves, flowers and siliques. Mainly detected in larger expanded leaves, in the companion cells of major veins.

Its subcellular location is the cell membrane. Low-affinity nitrate transporter involved in xylem-to-phloem transfer for redistributing nitrate into developing leaves. Not involved in dipeptides transport. The sequence is that of Protein NRT1/ PTR FAMILY 1.2 (NPF1.2) from Arabidopsis thaliana (Mouse-ear cress).